Consider the following 274-residue polypeptide: GPN-loop GTPase 3 (274 aa).

13 to 18 serves as a coordination point for GTP; the sequence is GVGKST. The short motif at 70–72 is the Gly-Pro-Asn (GPN)-loop; involved in dimer interface element; the sequence is GPN. 173-176 is a binding site for GTP; it reads SKID. Residues 255 to 274 form a disordered region; the sequence is SESQEPKEPVEEIEEEVDFE. The span at 265 to 274 shows a compositional bias: acidic residues; that stretch reads EEIEEEVDFE.

This sequence belongs to the GPN-loop GTPase family. Heterodimers with GPN1 or GPN2. Binds to RNA polymerase II (RNAPII).

Its function is as follows. Small GTPase required for proper nuclear import of RNA polymerase II and III (RNAPII and RNAPIII). May act at an RNAP assembly step prior to nuclear import. This is GPN-loop GTPase 3 from Debaryomyces hansenii (strain ATCC 36239 / CBS 767 / BCRC 21394 / JCM 1990 / NBRC 0083 / IGC 2968) (Yeast).